Here is an 851-residue protein sequence, read N- to C-terminus: Beta-galactosidase BoGH2A (851 aa).

Positions Met1–Ser19 are cleaved as a signal peptide. The N-palmitoyl cysteine moiety is linked to residue Cys20. Residue Cys20 is the site of S-diacylglycerol cysteine attachment. The Proton donor role is filled by Glu437. Glu544 serves as the catalytic Nucleophile.

Belongs to the glycosyl hydrolase 2 family.

The protein resides in the cell inner membrane. It carries out the reaction Hydrolysis of terminal non-reducing beta-D-galactose residues in beta-D-galactosides.. Its pathway is glucan metabolism; xyloglucan degradation. In terms of biological role, catalyzes the hydrolysis of terminal non-reducing beta-D-galactose residues in beta-D-galactosides in xyloglucan degradation, converting 'L' units to 'X' units. The sequence is that of Beta-galactosidase BoGH2A from Bacteroides ovatus (strain ATCC 8483 / DSM 1896 / JCM 5824 / BCRC 10623 / CCUG 4943 / NCTC 11153).